The sequence spans 268 residues: Bis(5'-nucleosyl)-tetraphosphatase, symmetrical (268 aa).

The protein belongs to the Ap4A hydrolase family.

It carries out the reaction P(1),P(4)-bis(5'-adenosyl) tetraphosphate + H2O = 2 ADP + 2 H(+). Its function is as follows. Hydrolyzes diadenosine 5',5'''-P1,P4-tetraphosphate to yield ADP. This Vibrio parahaemolyticus serotype O3:K6 (strain RIMD 2210633) protein is Bis(5'-nucleosyl)-tetraphosphatase, symmetrical.